The following is a 1072-amino-acid chain: Carbamoyl phosphate synthase large chain (1072 aa).

The carboxyphosphate synthetic domain stretch occupies residues 1–401; sequence MPKYKDISKV…SLLKAVRSLE (401 aa). ATP contacts are provided by R129, R169, G175, G176, K208, L210, E215, G241, V242, H243, Q284, and E298. The 195-residue stretch at 133-327 folds into the ATP-grasp 1 domain; that stretch reads KRKMQEIGEP…IAKIAAKIAI (195 aa). Mg(2+)-binding residues include Q284, E298, and N300. The Mn(2+) site is built by Q284, E298, and N300. Residues 402–544 form an oligomerization domain region; that stretch reads IKAYGLRLDS…YIYSTYCEED (143 aa). The tract at residues 545 to 929 is carbamoyl phosphate synthetic domain; that stretch reads EVETHDIPKV…ALYKALEGAG (385 aa). An ATP-grasp 2 domain is found at 671-861; that stretch reads SKLLKELNIN…MVKLAVEVAL (191 aa). Residues R707, K746, I748, E752, G777, V778, H779, S780, Q820, and E832 each coordinate ATP. Q820, E832, and N834 together coordinate Mg(2+). Mn(2+) contacts are provided by Q820, E832, and N834. In terms of domain architecture, MGS-like spans 930–1072; the sequence is LKIPKKGKIL…QKDNVKNLVL (143 aa). Residues 930-1072 form an allosteric domain region; that stretch reads LKIPKKGKIL…QKDNVKNLVL (143 aa).

This sequence belongs to the CarB family. Composed of two chains; the small (or glutamine) chain promotes the hydrolysis of glutamine to ammonia, which is used by the large (or ammonia) chain to synthesize carbamoyl phosphate. Tetramer of heterodimers (alpha,beta)4. Mg(2+) serves as cofactor. The cofactor is Mn(2+).

The enzyme catalyses hydrogencarbonate + L-glutamine + 2 ATP + H2O = carbamoyl phosphate + L-glutamate + 2 ADP + phosphate + 2 H(+). It carries out the reaction hydrogencarbonate + NH4(+) + 2 ATP = carbamoyl phosphate + 2 ADP + phosphate + 2 H(+). It participates in amino-acid biosynthesis; L-arginine biosynthesis; carbamoyl phosphate from bicarbonate: step 1/1. It functions in the pathway pyrimidine metabolism; UMP biosynthesis via de novo pathway; (S)-dihydroorotate from bicarbonate: step 1/3. Large subunit of the glutamine-dependent carbamoyl phosphate synthetase (CPSase). CPSase catalyzes the formation of carbamoyl phosphate from the ammonia moiety of glutamine, carbonate, and phosphate donated by ATP, constituting the first step of 2 biosynthetic pathways, one leading to arginine and/or urea and the other to pyrimidine nucleotides. The large subunit (synthetase) binds the substrates ammonia (free or transferred from glutamine from the small subunit), hydrogencarbonate and ATP and carries out an ATP-coupled ligase reaction, activating hydrogencarbonate by forming carboxy phosphate which reacts with ammonia to form carbamoyl phosphate. The polypeptide is Carbamoyl phosphate synthase large chain (Caldanaerobacter subterraneus subsp. tengcongensis (strain DSM 15242 / JCM 11007 / NBRC 100824 / MB4) (Thermoanaerobacter tengcongensis)).